A 91-amino-acid polypeptide reads, in one-letter code: uncharacterized protein (91 aa).

The next 2 membrane-spanning stretches (helical) occupy residues 5-27 and 47-69; these read FFKY…TNFQ and DFYH…FIFF.

It localises to the cell membrane. This is an uncharacterized protein from Archaeoglobus fulgidus (strain ATCC 49558 / DSM 4304 / JCM 9628 / NBRC 100126 / VC-16).